We begin with the raw amino-acid sequence, 67 residues long: MLCLPVFIILLLLASPAAPKSFETKVQSDLTRTDGNMETEENLGEVRKVYCCLGVRDDWCCAGQIQI.

Residues 1 to 19 (MLCLPVFIILLLLASPAAP) form the signal peptide. Positions 20-46 (KSFETKVQSDLTRTDGNMETEENLGEV) are excised as a propeptide.

Belongs to the conotoxin T superfamily. Post-translationally, contains 2 disulfide bonds that can be either 'C1-C3, C2-C4' or 'C1-C4, C2-C3', since these disulfide connectivities have been observed for conotoxins with cysteine framework V (for examples, see AC P0DQQ7 and AC P81755). Expressed by the venom duct.

It is found in the secreted. The protein is Conotoxin Lt5.9 of Conus litteratus (Lettered cone).